Reading from the N-terminus, the 599-residue chain is Sulfite reductase [NADPH] flavoprotein alpha-component (599 aa).

In terms of domain architecture, Flavodoxin-like spans 64-202; it reads VTLISASQTG…AASEWRARVV (139 aa). Residues 70-75, 117-120, and 153-162 each bind FMN; these read SQTGNA, STQG, and LGDTSYEFFC. In terms of domain architecture, FAD-binding FR-type spans 234-448; the sequence is DAPLTATLSV…IEHNDNFRLP (215 aa). Residues Thr322, Ala356, 386 to 389, 404 to 406, Tyr410, and 419 to 422 contribute to the FAD site; these read RLYS, TVG, and GGAS. Residues 519–520, 525–529, and Asp561 contribute to the NADP(+) site; these read SR and KIYVQ. Residue Tyr599 participates in FAD binding.

It belongs to the NADPH-dependent sulphite reductase flavoprotein subunit CysJ family. In the N-terminal section; belongs to the flavodoxin family. The protein in the C-terminal section; belongs to the flavoprotein pyridine nucleotide cytochrome reductase family. In terms of assembly, alpha(8)-beta(8). The alpha component is a flavoprotein, the beta component is a hemoprotein. It depends on FAD as a cofactor. FMN serves as cofactor.

The catalysed reaction is hydrogen sulfide + 3 NADP(+) + 3 H2O = sulfite + 3 NADPH + 4 H(+). Its pathway is sulfur metabolism; hydrogen sulfide biosynthesis; hydrogen sulfide from sulfite (NADPH route): step 1/1. In terms of biological role, component of the sulfite reductase complex that catalyzes the 6-electron reduction of sulfite to sulfide. This is one of several activities required for the biosynthesis of L-cysteine from sulfate. The flavoprotein component catalyzes the electron flow from NADPH -&gt; FAD -&gt; FMN to the hemoprotein component. The polypeptide is Sulfite reductase [NADPH] flavoprotein alpha-component (Salmonella paratyphi A (strain ATCC 9150 / SARB42)).